Here is a 411-residue protein sequence, read N- to C-terminus: Calmodulin-binding receptor-like cytoplasmic kinase 2 (411 aa).

Disordered stretches follow at residues 1–44 (MPSR…DTTT) and 66–99 (SNYI…YGNA). Low complexity-rich tracts occupy residues 16–44 (TTSS…DTTT) and 66–95 (SNYI…VQRS). Thr108 is subject to Phosphothreonine. Residues 119 to 398 (FSPSFRIGQG…MKKCSEILWG (280 aa)) form the Protein kinase domain. Residues 125–133 (IGQGGFGTV) and Lys147 contribute to the ATP site. Positions 134 to 159 (YKVKLRDGKTFAVKRAKKSMHDDRQG) are caM-binding. Asp247 (proton acceptor) is an active-site residue. Ser251 and Ser283 each carry phosphoserine. 2 positions are modified to phosphothreonine: Thr284 and Thr289. Tyr297 is subject to Phosphotyrosine.

It belongs to the protein kinase superfamily. Ser/Thr protein kinase family. As to quaternary structure, interacts with calmodulin (CaM) in a Ca(2+)-dependent manner.

The protein resides in the cytoplasm. It carries out the reaction L-seryl-[protein] + ATP = O-phospho-L-seryl-[protein] + ADP + H(+). The enzyme catalyses L-threonyl-[protein] + ATP = O-phospho-L-threonyl-[protein] + ADP + H(+). The polypeptide is Calmodulin-binding receptor-like cytoplasmic kinase 2 (CRCK2) (Arabidopsis thaliana (Mouse-ear cress)).